The following is a 238-amino-acid chain: MSQLNVDPQEIAKFEALAAKWWDQHSEFRPLHQINPLRLNWIDEHAGGLAGKKVLDVGCGGGILAESMARRGADVLGIDMGEAPLNVARLHAEQEQVANIEYRQIPVEELAQEQAGQYDIVTCMEMMEHVPDPASIIKACQTLVKPGGHVFFSTINRNPKSYLFAIIGAEYVLRLLPKGTHDYHKFIRPSEMAHDIREAGLKLKDMTGLHYNPLTKHYWLAPNVDVNYMVHTLKEGQS.

Residues R38, G58, D79, and M124 each contribute to the S-adenosyl-L-methionine site.

The protein belongs to the methyltransferase superfamily. UbiG/COQ3 family.

The enzyme catalyses a 3-demethylubiquinol + S-adenosyl-L-methionine = a ubiquinol + S-adenosyl-L-homocysteine + H(+). It carries out the reaction a 3-(all-trans-polyprenyl)benzene-1,2-diol + S-adenosyl-L-methionine = a 2-methoxy-6-(all-trans-polyprenyl)phenol + S-adenosyl-L-homocysteine + H(+). It participates in cofactor biosynthesis; ubiquinone biosynthesis. In terms of biological role, O-methyltransferase that catalyzes the 2 O-methylation steps in the ubiquinone biosynthetic pathway. This Acinetobacter baylyi (strain ATCC 33305 / BD413 / ADP1) protein is Ubiquinone biosynthesis O-methyltransferase.